A 175-amino-acid chain; its full sequence is NADH-ubiquinone oxidoreductase chain 6 (175 aa).

5 consecutive transmembrane segments (helical) span residues 1–21 (MMTY…VGFS), 27–47 (VYGG…IMNF), 49–69 (GSFL…VVFG), 88–108 (VVFG…LYVL), and 149–169 (YGMW…VVVM).

This sequence belongs to the complex I subunit 6 family. Core subunit of respiratory chain NADH dehydrogenase (Complex I) which is composed of 45 different subunits.

The protein localises to the mitochondrion inner membrane. It catalyses the reaction a ubiquinone + NADH + 5 H(+)(in) = a ubiquinol + NAD(+) + 4 H(+)(out). In terms of biological role, core subunit of the mitochondrial membrane respiratory chain NADH dehydrogenase (Complex I) which catalyzes electron transfer from NADH through the respiratory chain, using ubiquinone as an electron acceptor. Essential for the catalytic activity and assembly of complex I. This is NADH-ubiquinone oxidoreductase chain 6 (MT-ND6) from Pteropus scapulatus (Little red flying fox).